Reading from the N-terminus, the 473-residue chain is Trehalose-6-phosphate synthase (473 aa).

Residue R10 coordinates D-glucose 6-phosphate. Position 21-22 (21-22 (GG)) interacts with UDP-alpha-D-glucose. Positions 76 and 130 each coordinate D-glucose 6-phosphate. Residues R262 and K267 each contribute to the UDP-alpha-D-glucose site. R300 serves as a coordination point for D-glucose 6-phosphate. Residues F339 and 365–369 (LVAKE) each bind UDP-alpha-D-glucose.

This sequence belongs to the glycosyltransferase 20 family. As to quaternary structure, homotetramer.

It carries out the reaction D-glucose 6-phosphate + UDP-alpha-D-glucose = alpha,alpha-trehalose 6-phosphate + UDP + H(+). It participates in glycan biosynthesis; trehalose biosynthesis. Probably involved in the osmoprotection via the biosynthesis of trehalose. Catalyzes the transfer of glucose from UDP-alpha-D-glucose (UDP-Glc) to D-glucose 6-phosphate (Glc-6-P) to form trehalose-6-phosphate. Acts with retention of the anomeric configuration of the UDP-sugar donor. This Citrobacter koseri (strain ATCC BAA-895 / CDC 4225-83 / SGSC4696) protein is Trehalose-6-phosphate synthase.